The primary structure comprises 398 residues: S-adenosylmethionine synthase (398 aa).

His16 is an ATP binding site. Asp18 is a Mg(2+) binding site. Glu51 lines the K(+) pocket. Positions 64 and 108 each coordinate L-methionine. Positions Gln108 to Ala118 are flexible loop. ATP is bound by residues Asp176 to Lys178, Lys242 to Phe243, Asp251, Arg257 to Lys258, Ala274, and Lys278. Asp251 provides a ligand contact to L-methionine. Lys282 is a binding site for L-methionine.

It belongs to the AdoMet synthase family. In terms of assembly, homotetramer; dimer of dimers. Requires Mg(2+) as cofactor. The cofactor is K(+).

It is found in the cytoplasm. The catalysed reaction is L-methionine + ATP + H2O = S-adenosyl-L-methionine + phosphate + diphosphate. It participates in amino-acid biosynthesis; S-adenosyl-L-methionine biosynthesis; S-adenosyl-L-methionine from L-methionine: step 1/1. Catalyzes the formation of S-adenosylmethionine (AdoMet) from methionine and ATP. The overall synthetic reaction is composed of two sequential steps, AdoMet formation and the subsequent tripolyphosphate hydrolysis which occurs prior to release of AdoMet from the enzyme. This chain is S-adenosylmethionine synthase, found in Nitrobacter hamburgensis (strain DSM 10229 / NCIMB 13809 / X14).